The primary structure comprises 508 residues: Replication factor C large subunit (508 aa).

43–50 (GSPGIGKT) contributes to the ATP binding site. The interval 425–508 (AVEHSGGVFE…DQQSGLSDFM (84 aa)) is disordered. 2 stretches are compositionally biased toward acidic residues: residues 443–461 (GDSDADGDAPDTDAGEESG) and 483–500 (TTDDETETASEAAEDDDQ).

It belongs to the activator 1 small subunits family. RfcL subfamily. As to quaternary structure, heteromultimer composed of small subunits (RfcS) and large subunits (RfcL).

In terms of biological role, part of the RFC clamp loader complex which loads the PCNA sliding clamp onto DNA. This chain is Replication factor C large subunit, found in Haloarcula marismortui (strain ATCC 43049 / DSM 3752 / JCM 8966 / VKM B-1809) (Halobacterium marismortui).